A 427-amino-acid polypeptide reads, in one-letter code: Imidazolonepropionase (427 aa).

Fe(3+) is bound by residues His96 and His98. Zn(2+) contacts are provided by His96 and His98. Residues Arg105, Tyr168, and His201 each coordinate 4-imidazolone-5-propanoate. N-formimidoyl-L-glutamate is bound at residue Tyr168. Residue His265 coordinates Fe(3+). Zn(2+) is bound at residue His265. Gln268 serves as a coordination point for 4-imidazolone-5-propanoate. Position 340 (Asp340) interacts with Fe(3+). Position 340 (Asp340) interacts with Zn(2+). Residues Asn342 and Gly344 each contribute to the N-formimidoyl-L-glutamate site. Thr345 is a 4-imidazolone-5-propanoate binding site.

The protein belongs to the metallo-dependent hydrolases superfamily. HutI family. Zn(2+) serves as cofactor. The cofactor is Fe(3+).

The protein localises to the cytoplasm. It carries out the reaction 4-imidazolone-5-propanoate + H2O = N-formimidoyl-L-glutamate. The protein operates within amino-acid degradation; L-histidine degradation into L-glutamate; N-formimidoyl-L-glutamate from L-histidine: step 3/3. In terms of biological role, catalyzes the hydrolytic cleavage of the carbon-nitrogen bond in imidazolone-5-propanoate to yield N-formimidoyl-L-glutamate. It is the third step in the universal histidine degradation pathway. The chain is Imidazolonepropionase from Psychrobacter cryohalolentis (strain ATCC BAA-1226 / DSM 17306 / VKM B-2378 / K5).